A 521-amino-acid chain; its full sequence is GMP synthase [glutamine-hydrolyzing] (521 aa).

The 193-residue stretch at 5–197 folds into the Glutamine amidotransferase type-1 domain; that stretch reads KILILDFGSQ…VLDICGAQPG (193 aa). C81 serves as the catalytic Nucleophile. Active-site residues include H171 and E173. The GMPS ATP-PPase domain occupies 198–390; the sequence is WTMPNYIEEA…LGLPREMVYR (193 aa). Position 225-231 (225-231) interacts with ATP; sequence SGGVDSS.

As to quaternary structure, homodimer.

It catalyses the reaction XMP + L-glutamine + ATP + H2O = GMP + L-glutamate + AMP + diphosphate + 2 H(+). The protein operates within purine metabolism; GMP biosynthesis; GMP from XMP (L-Gln route): step 1/1. Catalyzes the synthesis of GMP from XMP. This chain is GMP synthase [glutamine-hydrolyzing], found in Neisseria gonorrhoeae (strain NCCP11945).